The primary structure comprises 783 residues: Ubiquitin carboxyl-terminal hydrolase 1 (783 aa).

Disordered stretches follow at residues 1-22 and 34-55; these read MPGV…KKNR and KRAL…YKGS. Over residues 7-16 the composition is skewed to polar residues; the sequence is SESNGLSRGS. Residues S16 and S42 each carry the phosphoserine modification. The segment covering 45–55 has biased composition (basic and acidic residues); the sequence is NEEKTSEYKGS. The residue at position 67 (S67) is a Phosphoserine. The USP domain occupies 81–783; the sequence is VGLNNLGNTC…TPYLLFYKKL (703 aa). C90 functions as the Nucleophile in the catalytic mechanism. The segment at 234–311 is disordered; the sequence is EEYQKEEMSD…RKAAGDTLEI (78 aa). 2 stretches are compositionally biased toward basic and acidic residues: residues 250–273 and 284–296; these read DNMR…KSDA and ISKE…ENQR. The residue at position 473 (S473) is a Phosphoserine. H591 acts as the Proton acceptor in catalysis. The tract at residues 685–722 is disordered; it reads PDKVASTALPENRNSETNNTNGTDESDSNKESSDQTGI. Phosphoserine is present on S766.

This sequence belongs to the peptidase C19 family. In terms of assembly, interacts with FANCD2 and PCNA. Interacts with WDR48. Interacts with ATAD5; the interaction regulates USP1-mediated PCNA deubiquitination. Autocatalytic cleavage of USP1 following UV irradiation inactivates it, leading to an increase in ubiquitinated PCNA, recruitment of POLH and translesion synthesis. Post-translationally, ubiquitinated by the CRL2(KLHDC2) complex following autocatalytic cleavage, leading to its degradation: the CRL2(KLHDC2) complex recognizes the diglycine (Gly-Gly) at the C-terminus.

The protein localises to the nucleus. It catalyses the reaction Thiol-dependent hydrolysis of ester, thioester, amide, peptide and isopeptide bonds formed by the C-terminal Gly of ubiquitin (a 76-residue protein attached to proteins as an intracellular targeting signal).. Negative regulator of DNA damage repair which specifically deubiquitinates monoubiquitinated FANCD2. Also involved in PCNA-mediated translesion synthesis (TLS) by deubiquitinating monoubiquitinated PCNA. Has almost no deubiquitinating activity by itself and requires the interaction with WDR48 to have a high activity. The sequence is that of Ubiquitin carboxyl-terminal hydrolase 1 from Bos taurus (Bovine).